The primary structure comprises 311 residues: Tricarboxylate transport protein, mitochondrial (311 aa).

A propeptide spans 1–13 (MPAPRAPRALAAA) (removed in mature form). 3 Solcar repeats span residues 23–111 (THPG…LSNH), 122–208 (TRGL…LRNW), and 218–303 (MNPL…VVKL). The next 3 helical transmembrane spans lie at 29 to 46 (ILAG…TFPT), 86 to 105 (GLSS…FGMF), and 129 to 143 (LGAG…VCPM). Serine 156 is modified (phosphoserine). 3 consecutive transmembrane segments (helical) span residues 183–202 (GLTA…FFVM), 224–241 (GVFG…NTPL), and 278–297 (GTVP…FVIY).

It belongs to the mitochondrial carrier (TC 2.A.29) family. Possesses a short cleavable presequence, which, however, is found to be dispensable both for targeting to mitochondria and insertion into the inner membrane. However, the presequence is required to keep SLC25A1 in a soluble state and thus in an import-competent state. Mature SLC25A1 lacking the presequence is prone to aggregation.

It localises to the mitochondrion inner membrane. The enzyme catalyses (S)-malate(in) + citrate(out) = (S)-malate(out) + citrate(in). It catalyses the reaction D-threo-isocitrate(in) + citrate(out) = D-threo-isocitrate(out) + citrate(in). It carries out the reaction citrate(out) + succinate(in) = citrate(in) + succinate(out). The catalysed reaction is cis-aconitate(in) + citrate(out) = cis-aconitate(out) + citrate(in). The enzyme catalyses trans-aconitate(in) + citrate(out) = trans-aconitate(out) + citrate(in). It catalyses the reaction phosphoenolpyruvate(in) + citrate(out) = phosphoenolpyruvate(out) + citrate(in). It carries out the reaction maleate(in) + citrate(out) = maleate(out) + citrate(in). In terms of biological role, mitochondrial electroneutral antiporter that exports citrate from the mitochondria into the cytosol in exchange for malate. Also able to mediate the exchange of citrate for isocitrate, phosphoenolpyruvate, cis-aconitate and to a lesser extent trans-aconitate, maleate and succinate. In the cytoplasm, citrate plays important roles in fatty acid and sterol synthesis, regulation of glycolysis, protein acetylation, and other physiopathological processes. The chain is Tricarboxylate transport protein, mitochondrial (SLC25A1) from Homo sapiens (Human).